Consider the following 521-residue polypeptide: Apolipoprotein N-acyltransferase (521 aa).

6 consecutive transmembrane segments (helical) span residues 27–47 (VLLA…IAFA), 64–84 (LGFV…TIVV), 93–113 (IVSV…PAVV), 125–145 (ISLL…RAFL), 167–187 (IADI…NVVL), and 202–222 (YPVK…AYGF). One can recognise a CN hydrolase domain in the interval 239–483 (IQGNIDQNIK…EAVLNGEVRL (245 aa)). Glutamate 281 acts as the Proton acceptor in catalysis. Lysine 344 is a catalytic residue. Cysteine 394 acts as the Nucleophile in catalysis. A helical membrane pass occupies residues 493 to 513 (YGDVFAWACVAGAAVVAALAF).

The protein belongs to the CN hydrolase family. Apolipoprotein N-acyltransferase subfamily.

Its subcellular location is the cell inner membrane. It catalyses the reaction N-terminal S-1,2-diacyl-sn-glyceryl-L-cysteinyl-[lipoprotein] + a glycerophospholipid = N-acyl-S-1,2-diacyl-sn-glyceryl-L-cysteinyl-[lipoprotein] + a 2-acyl-sn-glycero-3-phospholipid + H(+). The protein operates within protein modification; lipoprotein biosynthesis (N-acyl transfer). Catalyzes the phospholipid dependent N-acylation of the N-terminal cysteine of apolipoprotein, the last step in lipoprotein maturation. The polypeptide is Apolipoprotein N-acyltransferase (Geobacter metallireducens (strain ATCC 53774 / DSM 7210 / GS-15)).